The following is a 360-amino-acid chain: Photosystem II protein D1 (360 aa).

3 helical membrane passes run 29 to 46, 118 to 133, and 142 to 156; these read YVGW…TATT, HFLL…QWEL, and WICV…AATA. His-118 contacts chlorophyll a. Tyr-126 is a binding site for pheophytin a. [CaMn4O5] cluster-binding residues include Asp-170 and Glu-189. Residues 197–218 form a helical membrane-spanning segment; sequence FHMLGVAGVFGGSLFSAMHGSL. His-198 contacts chlorophyll a. Residues His-215 and 264–265 contribute to the a quinone site; that span reads SF. His-215 serves as a coordination point for Fe cation. Residue His-272 participates in Fe cation binding. The chain crosses the membrane as a helical span at residues 274–288; that stretch reads FLGAWPVIGIWFTAM. Positions 332, 333, 342, and 344 each coordinate [CaMn4O5] cluster. The propeptide occupies 345–360; that stretch reads SGEQAPVALTAPAING.

The protein belongs to the reaction center PufL/M/PsbA/D family. In terms of assembly, PSII is composed of 1 copy each of membrane proteins PsbA, PsbB, PsbC, PsbD, PsbE, PsbF, PsbH, PsbI, PsbJ, PsbK, PsbL, PsbM, PsbT, PsbX, PsbY, PsbZ, Psb30/Ycf12, peripheral proteins PsbO, CyanoQ (PsbQ), PsbU, PsbV and a large number of cofactors. It forms dimeric complexes. Requires The D1/D2 heterodimer binds P680, chlorophylls that are the primary electron donor of PSII, and subsequent electron acceptors. It shares a non-heme iron and each subunit binds pheophytin, quinone, additional chlorophylls, carotenoids and lipids. D1 provides most of the ligands for the Mn4-Ca-O5 cluster of the oxygen-evolving complex (OEC). There is also a Cl(-1) ion associated with D1 and D2, which is required for oxygen evolution. The PSII complex binds additional chlorophylls, carotenoids and specific lipids. as cofactor. In terms of processing, tyr-161 forms a radical intermediate that is referred to as redox-active TyrZ, YZ or Y-Z. Post-translationally, C-terminally processed by CtpA; processing is essential to allow assembly of the oxygen-evolving complex and thus photosynthetic growth.

The protein localises to the cellular thylakoid membrane. It catalyses the reaction 2 a plastoquinone + 4 hnu + 2 H2O = 2 a plastoquinol + O2. Photosystem II (PSII) is a light-driven water:plastoquinone oxidoreductase that uses light energy to abstract electrons from H(2)O, generating O(2) and a proton gradient subsequently used for ATP formation. It consists of a core antenna complex that captures photons, and an electron transfer chain that converts photonic excitation into a charge separation. The D1/D2 (PsbA/PsbD) reaction center heterodimer binds P680, the primary electron donor of PSII as well as several subsequent electron acceptors. In Microcystis aeruginosa, this protein is Photosystem II protein D1.